Here is a 131-residue protein sequence, read N- to C-terminus: Large ribosomal subunit protein bL17 (131 aa).

Belongs to the bacterial ribosomal protein bL17 family. In terms of assembly, part of the 50S ribosomal subunit. Contacts protein L32.

This Finegoldia magna (strain ATCC 29328 / DSM 20472 / WAL 2508) (Peptostreptococcus magnus) protein is Large ribosomal subunit protein bL17.